The chain runs to 168 residues: KLQLKTLLLQRAKRELEREEQERAGEKQRHLGGLCPPPELEGLGVAQLQELCRELHARIAVDEERYDMGTRVSKNMAEMEELRRRVAGGRFVRPALRRVRLSADAMMAALLGSKHRVGTDLRAGLRQVRKDDAEKESREVGDWRKNVDALSGMEGRKKKFEAPGGGQG.

Positions 128–147 are enriched in basic and acidic residues; sequence VRKDDAEKESREVGDWRKNV. Residues 128–168 are disordered; the sequence is VRKDDAEKESREVGDWRKNVDALSGMEGRKKKFEAPGGGQG.

This sequence belongs to the troponin I family. As to quaternary structure, binds to actin and tropomyosin.

Troponin I is the inhibitory subunit of troponin, the thin filament regulatory complex which confers calcium-sensitivity to striated muscle actomyosin ATPase activity. This chain is Troponin I, cardiac muscle (TNNI3), found in Gallus gallus (Chicken).